Here is a 569-residue protein sequence, read N- to C-terminus: S-(+)-linalool synthase, chloroplastic (569 aa).

The transit peptide at 1–39 (MALIATKISSRSCFVSAYPNNSPTFLISKFPNTVDSLSP) directs the protein to the chloroplast. The (2E)-geranyl diphosphate site is built by Arg-294, Asp-331, Asp-335, Arg-472, and Asp-475. Asp-331 and Asp-335 together coordinate Mg(2+). Residues 331-335 (DDIFD) carry the DDXXD motif motif. The Mg(2+) site is built by Asp-475, Ser-479, and Glu-483.

It belongs to the terpene synthase family. Tpsb subfamily. It depends on Mg(2+) as a cofactor. Mn(2+) is required as a cofactor. Predominantly expressed in flowers but also in stems and siliques.

Its subcellular location is the plastid. The protein resides in the chloroplast. The catalysed reaction is (2E)-geranyl diphosphate + H2O = (S)-linalool + diphosphate. The protein operates within secondary metabolite biosynthesis; terpenoid biosynthesis. Its function is as follows. Involved in monoterpene (C10) biosynthesis. The major product is (S)-linalool. The chain is S-(+)-linalool synthase, chloroplastic from Arabidopsis thaliana (Mouse-ear cress).